Reading from the N-terminus, the 228-residue chain is DOPA 4,5-dioxygenase (228 aa).

In terms of assembly, homodimer. Expressed at high level in coloured cap tissue and at least 10 times lower level in the stipe.

It localises to the cytoplasm. Its pathway is pigment biosynthesis; betalain biosynthesis. Functionally, extradiol dioxygenase that opens up the cyclic ring of DOPA between carbons 4 and 5 thus producing an unstable seco-DOPA that rearranges non-enzymatically to betalamic acid. Can also catalyze the formation of muscaflavin (a pigment found in the hygrocybe mushrooms family and of some amanita species only) by a 2,3-extradiol cleavage of DOPA. The chain is DOPA 4,5-dioxygenase (DODA) from Amanita muscaria (Fly agaric).